The following is a 153-amino-acid chain: Ribosome maturation factor RimP (153 aa).

Belongs to the RimP family.

The protein resides in the cytoplasm. Its function is as follows. Required for maturation of 30S ribosomal subunits. The protein is Ribosome maturation factor RimP of Clostridium botulinum (strain Okra / Type B1).